Reading from the N-terminus, the 362-residue chain is Histidinol-phosphate aminotransferase (362 aa).

Lys-219 is subject to N6-(pyridoxal phosphate)lysine.

Belongs to the class-II pyridoxal-phosphate-dependent aminotransferase family. Histidinol-phosphate aminotransferase subfamily. As to quaternary structure, homodimer. Requires pyridoxal 5'-phosphate as cofactor.

It carries out the reaction L-histidinol phosphate + 2-oxoglutarate = 3-(imidazol-4-yl)-2-oxopropyl phosphate + L-glutamate. It participates in amino-acid biosynthesis; L-histidine biosynthesis; L-histidine from 5-phospho-alpha-D-ribose 1-diphosphate: step 7/9. This is Histidinol-phosphate aminotransferase from Maricaulis maris (strain MCS10) (Caulobacter maris).